A 153-amino-acid polypeptide reads, in one-letter code: UPF0756 membrane protein lwe1581 (153 aa).

4 helical membrane-spanning segments follow: residues 6–26, 54–74, 80–100, and 117–137; these read MLFL…SLII, WGVT…QIGF, SFKS…SILA, and LVFG…GPVI.

This sequence belongs to the UPF0756 family.

The protein resides in the cell membrane. The polypeptide is UPF0756 membrane protein lwe1581 (Listeria welshimeri serovar 6b (strain ATCC 35897 / DSM 20650 / CCUG 15529 / CIP 8149 / NCTC 11857 / SLCC 5334 / V8)).